The primary structure comprises 272 residues: Shikimate dehydrogenase (NADP(+)) (272 aa).

Residues 16–18 and T63 contribute to the shikimate site; that span reads SLS. Residue K67 is the Proton acceptor of the active site. Position 79 (E79) interacts with NADP(+). Residues N88 and D103 each coordinate shikimate. NADP(+)-binding positions include 127-131, 151-156, and I212; these read GAGGA and NRTMSR. A shikimate-binding site is contributed by Y214. Residue G235 coordinates NADP(+).

The protein belongs to the shikimate dehydrogenase family. Homodimer.

It carries out the reaction shikimate + NADP(+) = 3-dehydroshikimate + NADPH + H(+). It participates in metabolic intermediate biosynthesis; chorismate biosynthesis; chorismate from D-erythrose 4-phosphate and phosphoenolpyruvate: step 4/7. Functionally, involved in the biosynthesis of the chorismate, which leads to the biosynthesis of aromatic amino acids. Catalyzes the reversible NADPH linked reduction of 3-dehydroshikimate (DHSA) to yield shikimate (SA). In Staphylococcus epidermidis (strain ATCC 12228 / FDA PCI 1200), this protein is Shikimate dehydrogenase (NADP(+)).